The sequence spans 449 residues: CCA-adding enzyme (449 aa).

Residues Ser57 and Arg60 each contribute to the ATP site. CTP is bound by residues Ser57 and Arg60. 3 residues coordinate Mg(2+): Asp69, Asp71, and Asp124. 3 residues coordinate ATP: His147, Lys167, and Tyr176. CTP is bound by residues His147, Lys167, and Tyr176.

This sequence belongs to the tRNA nucleotidyltransferase/poly(A) polymerase family. Archaeal CCA-adding enzyme subfamily. Homodimer. Mg(2+) is required as a cofactor.

It catalyses the reaction a tRNA precursor + 2 CTP + ATP = a tRNA with a 3' CCA end + 3 diphosphate. The catalysed reaction is a tRNA with a 3' CCA end + 2 CTP + ATP = a tRNA with a 3' CCACCA end + 3 diphosphate. Catalyzes the addition and repair of the essential 3'-terminal CCA sequence in tRNAs without using a nucleic acid template. Adds these three nucleotides in the order of C, C, and A to the tRNA nucleotide-73, using CTP and ATP as substrates and producing inorganic pyrophosphate. tRNA 3'-terminal CCA addition is required both for tRNA processing and repair. Also involved in tRNA surveillance by mediating tandem CCA addition to generate a CCACCA at the 3' terminus of unstable tRNAs. While stable tRNAs receive only 3'-terminal CCA, unstable tRNAs are marked with CCACCA and rapidly degraded. The sequence is that of CCA-adding enzyme from Methanocaldococcus jannaschii (strain ATCC 43067 / DSM 2661 / JAL-1 / JCM 10045 / NBRC 100440) (Methanococcus jannaschii).